A 693-amino-acid chain; its full sequence is Elongation factor G (693 aa).

The tr-type G domain occupies 8–282 (KNTRNIGIMA…AVIDYLPSPL (275 aa)). GTP contacts are provided by residues 17-24 (AHIDAGKT), 81-85 (DTPGH), and 135-138 (NKMD).

Belongs to the TRAFAC class translation factor GTPase superfamily. Classic translation factor GTPase family. EF-G/EF-2 subfamily.

The protein localises to the cytoplasm. Catalyzes the GTP-dependent ribosomal translocation step during translation elongation. During this step, the ribosome changes from the pre-translocational (PRE) to the post-translocational (POST) state as the newly formed A-site-bound peptidyl-tRNA and P-site-bound deacylated tRNA move to the P and E sites, respectively. Catalyzes the coordinated movement of the two tRNA molecules, the mRNA and conformational changes in the ribosome. The sequence is that of Elongation factor G from Staphylococcus epidermidis (strain ATCC 35984 / DSM 28319 / BCRC 17069 / CCUG 31568 / BM 3577 / RP62A).